The primary structure comprises 387 residues: Ferrochelatase (387 aa).

Positions 1-318 (MGRVGVLLLN…VFIDALAQMV (318 aa)) are ferrochelatase. Residues His-196 and Glu-277 each contribute to the Fe cation site. Positions 319-387 (MDSLNDPPCT…QGPLHFVGLL (69 aa)) are hlip domain.

It in the N-terminal section; belongs to the ferrochelatase family. This sequence in the C-terminal section; belongs to the Hlip family.

It is found in the cytoplasm. It carries out the reaction heme b + 2 H(+) = protoporphyrin IX + Fe(2+). It participates in porphyrin-containing compound metabolism; protoheme biosynthesis; protoheme from protoporphyrin-IX: step 1/1. Functionally, catalyzes the ferrous insertion into protoporphyrin IX. Its function is as follows. The Hlip proteins might regulate tetrapyrrole biosynthesis, maybe at the level of aminolevulinic acid synthesis. Deletion of 4 to 5 members of the Hlip family (always including this member) suggests the proteins are involved in regulation of chlorophyll biosynthesis, in stabilization of chlorophyll-binding proteins and/or in reuse of chlorophylls, and may regulate tetrapyrrole biosynthesis. The Hlip proteins probably stabilize PSII assembly intermediates. This is Ferrochelatase from Synechocystis sp. (strain ATCC 27184 / PCC 6803 / Kazusa).